A 378-amino-acid chain; its full sequence is Septin-5 (378 aa).

The 274-residue stretch at 50–323 (KGFDFTLMVA…ENYRAHCIQQ (274 aa)) folds into the Septin-type G domain. The tract at residues 60–67 (GESGLGKS) is G1 motif. Residues 60-67 (GESGLGKS), T94, and G120 contribute to the GTP site. Positions 117–120 (DTPG) are G3 motif. R177 is subject to Omega-N-methylarginine. Positions 198-201 (AKAD) are G4 motif. 199–207 (KADCLVPSE) lines the GTP pocket. Position 234 is a phosphoserine (S234). GTP-binding residues include G257 and R272. Residue S336 is modified to Phosphoserine. Phosphothreonine is present on T345. A coiled-coil region spans residues 347 to 378 (DAETEKLIRMKDEELRRMQEMLQRMKQQMQDQ).

It belongs to the TRAFAC class TrmE-Era-EngA-EngB-Septin-like GTPase superfamily. Septin GTPase family. In terms of assembly, septins polymerize into heterooligomeric protein complexes that form filaments, and can associate with cellular membranes, actin filaments and microtubules. GTPase activity is required for filament formation. Interacts with SEPTIN2 and SEPTIN5. In platelets, associated with a complex containing STX4. Interacts with PRKN; this interaction leads to SEPTIN5 ubiquitination and degradation. Interacts with DYRK1A. Interacts with STX1A; in the cerebellar cortex. In terms of processing, phosphorylated by DYRK1A.

It is found in the cytoplasm. The protein localises to the cytoskeleton. Filament-forming cytoskeletal GTPase. May play a role in cytokinesis (Potential). May play a role in platelet secretion. The protein is Septin-5 of Macaca fascicularis (Crab-eating macaque).